Consider the following 473-residue polypeptide: Sun domain-containing protein 1 (473 aa).

Residues 1-47 (MALRHTISPQFSNRHSPPVTRSVSRTGVHQPLDTSTPVTRRDSQPGT) are disordered. The span at 7 to 47 (ISPQFSNRHSPPVTRSVSRTGVHQPLDTSTPVTRRDSQPGT) shows a compositional bias: polar residues. 2 coiled-coil regions span residues 163–191 (ISNLRAEFSAHDKQLDFKTDHLEKLLENV) and 204–235 (EELKQIKLWQAEISDALQQMKKEIDDAKSTKI). Residues 237 to 257 (HSTPEKAPETAPTASLPPSSQ) are disordered. A compositionally biased stretch (polar residues) spans 248-257 (PTASLPPSSQ). A helical transmembrane segment spans residues 262–282 (HITRRALLGVNVANSLIGASI). The region spanning 279-443 (GASIDHSCSS…YLIRVYGEPV (165 aa)) is the SUN domain. The disordered stretch occupies residues 443-473 (VDPPKETQPMTDNGTESKLESAIVNSVSETA).

It localises to the nucleus membrane. The protein localises to the nucleus envelope. Involved in centrosome attachment to the nucleus. Required for zyg-12 localization to the nuclear envelope. Together with pot-1, it is required to anchor telomeres to the nuclear envelope in embryos. The polypeptide is Sun domain-containing protein 1 (Caenorhabditis elegans).